Here is a 139-residue protein sequence, read N- to C-terminus: D-ribose pyranase (139 aa).

Histidine 20 serves as the catalytic Proton donor. Substrate is bound by residues aspartate 28, histidine 106, and 128 to 130 (YAN).

The protein belongs to the RbsD / FucU family. RbsD subfamily. In terms of assembly, homodecamer.

It localises to the cytoplasm. The catalysed reaction is beta-D-ribopyranose = beta-D-ribofuranose. Its pathway is carbohydrate metabolism; D-ribose degradation; D-ribose 5-phosphate from beta-D-ribopyranose: step 1/2. Its function is as follows. Catalyzes the interconversion of beta-pyran and beta-furan forms of D-ribose. In Escherichia coli O45:K1 (strain S88 / ExPEC), this protein is D-ribose pyranase.